The following is a 190-amino-acid chain: CASP-like protein 2U2 (190 aa).

Residues 1 to 10 (MGEKMQGFQG) are Cytoplasmic-facing. Residues 11-31 (WSIGIRFLTSCVSIASLILLL) traverse the membrane as a helical segment. Residues 32–59 (KSKQTVQVSVGLDYVTQQVKYSDTSAFV) are Extracellular-facing. Residues 60-80 (YLVFSDILVAVYCIVVLVGLI) traverse the membrane as a helical segment. At 81 to 94 (PAALGKSHPGKAGQ) the chain is on the cytoplasmic side. Residues 95-115 (WAIFIFDQVLAYVLLAAASSA) form a helical membrane-spanning segment. Topologically, residues 116–144 (TEVAYLADKGMAKTSWEAVCPRFAHFCHT) are extracellular. A helical membrane pass occupies residues 145-165 (VMASISLSFVAVLLLALLAVV). Residues 166–190 (SASGLFGRFYRRPLFAVKMRHNTLI) lie on the Cytoplasmic side of the membrane.

Belongs to the Casparian strip membrane proteins (CASP) family. As to quaternary structure, homodimer and heterodimers.

It localises to the cell membrane. This Pteridium aquilinum subsp. aquilinum (Bracken fern) protein is CASP-like protein 2U2.